Reading from the N-terminus, the 347-residue chain is D-fructose 1,6-bisphosphatase class 2/sedoheptulose 1,7-bisphosphatase (347 aa).

Mn(2+) contacts are provided by Asp33, Glu57, Asp97, and Glu100. Substrate is bound by residues 100-102 (EGT), Tyr131, 176-178 (RDR), and 198-200 (DGD). A Mn(2+)-binding site is contributed by Glu225.

It belongs to the FBPase class 2 family. In terms of assembly, homotetramer. Mn(2+) is required as a cofactor.

It catalyses the reaction beta-D-fructose 1,6-bisphosphate + H2O = beta-D-fructose 6-phosphate + phosphate. The catalysed reaction is D-sedoheptulose 1,7-bisphosphate + H2O = D-sedoheptulose 7-phosphate + phosphate. Its pathway is carbohydrate biosynthesis; Calvin cycle. Its function is as follows. Catalyzes the hydrolysis of fructose 1,6-bisphosphate (Fru 1,6-P2) and sedoheptulose 1,7-bisphosphate (Sed 1,7-P2) to fructose 6-phosphate and sedoheptulose 7-phosphate, respectively. The chain is D-fructose 1,6-bisphosphatase class 2/sedoheptulose 1,7-bisphosphatase from Thermosynechococcus vestitus (strain NIES-2133 / IAM M-273 / BP-1).